Here is a 397-residue protein sequence, read N- to C-terminus: Phosphoglycerate kinase (397 aa).

Residues 22–24 (DYN), R38, 61–64 (HLGR), R119, and R152 contribute to the substrate site. Residues K203, G294, E325, and 351-354 (GGDT) each bind ATP.

The protein belongs to the phosphoglycerate kinase family. As to quaternary structure, monomer.

It localises to the cytoplasm. The catalysed reaction is (2R)-3-phosphoglycerate + ATP = (2R)-3-phospho-glyceroyl phosphate + ADP. It functions in the pathway carbohydrate degradation; glycolysis; pyruvate from D-glyceraldehyde 3-phosphate: step 2/5. In Aquifex aeolicus (strain VF5), this protein is Phosphoglycerate kinase (pgk).